The primary structure comprises 183 residues: MVDPPGNDDDHGDLDALDFSAAHTNEASPLDALDDYAPVQTDDAEGDLDALHALTERDEEPELELFTVTNPQGSVSVSTLMDGRIQHVELTDKATSMSEAQLADEIFVIADLARQKARASQYTFMVENIGELTDEDAEGSALLREFVGMTLNLPTPEEAAAAEAEVFATRYDVDYTSRYKADD.

A compositionally biased stretch (acidic residues) spans 1 to 16; the sequence is MVDPPGNDDDHGDLDA. The tract at residues 1 to 32 is disordered; it reads MVDPPGNDDDHGDLDALDFSAAHTNEASPLDA.

The polypeptide is ESX-1 secretion-associated protein EspH (Mycobacterium tuberculosis (strain ATCC 25618 / H37Rv)).